A 354-amino-acid polypeptide reads, in one-letter code: Ornithine transcarbamylase, mitochondrial (354 aa).

The N-terminal 32 residues, 1–32 (MLFHLRTLLNNAALRNGHNFVVRNFRCGQPLQ), are a transit peptide targeting the mitochondrion. The residue at position 70 (K70) is an N6-acetyllysine; alternate. K70 carries the post-translational modification N6-succinyllysine; alternate. Position 80 is an N6-succinyllysine (K80). K88 is modified (N6-acetyllysine; alternate). At K88 the chain carries N6-succinyllysine; alternate. S133 bears the Phosphoserine mark. Residues K144, K221, K231, and K238 each carry the N6-acetyllysine; alternate modification. N6-succinyllysine; alternate occurs at positions 144, 221, 231, and 238. An N6-acetyllysine modification is found at K243. D263 is an active-site residue. An N6-succinyllysine mark is found at K274 and K289. K292 is subject to N6-acetyllysine; alternate. K292 is subject to N6-succinyllysine; alternate. Residue C303 is part of the active site. K307 carries the post-translational modification N6-acetyllysine; alternate. K307 carries the N6-succinyllysine; alternate modification.

Belongs to the aspartate/ornithine carbamoyltransferase superfamily. OTCase family. As to quaternary structure, homotrimer. Post-translationally, acetylation at Lys-88 negatively regulates ornithine carbamoyltransferase activity in response to nutrient signals.

It is found in the mitochondrion matrix. The catalysed reaction is carbamoyl phosphate + L-ornithine = L-citrulline + phosphate + H(+). The protein operates within nitrogen metabolism; urea cycle; L-citrulline from L-ornithine and carbamoyl phosphate: step 1/1. With respect to regulation, negatively regulated by lysine acetylation. Functionally, catalyzes the second step of the urea cycle, the condensation of carbamoyl phosphate with L-ornithine to form L-citrulline. The urea cycle ensures the detoxification of ammonia by converting it to urea for excretion. This chain is Ornithine transcarbamylase, mitochondrial, found in Bos taurus (Bovine).